Consider the following 409-residue polypeptide: MARSKFERKKPHVNIGTIGHVDHGKTTLTAAISATLSTLGSTAAKKFDEIDAAPEEKARGITINTAHVEYETDNRHYAHVDCPGHADYVKNMITGAAQMDGAILVVSAADGPMPQTREHILLAKQVGVPTLVVFLNKEDQVDDEELLELVELEGRELLSQYDFPGDDIPFVAGSALLALEAVTKNPAIKQGEDKWVDKIFSLMEAVDTYIPTPERDVDKTFLMAVEDVFSITGRGTVATGRIERGIIKVGDTIEIVGLRETRTTTITGLEMFQKTLEEGLAGDNIGILLRGVQKKDIERGMVLAKPGTITPHTQFEAEVYILTKEEGGRHTPFFPGYRPQFYVRTTDVTGTINQFTADDGTDAEMVMPGDRIKMTAELINAIAIEQGMRFAIREGGRTVGAGVVSKILK.

The 205-residue stretch at 10 to 214 folds into the tr-type G domain; that stretch reads KPHVNIGTIG…AVDTYIPTPE (205 aa). Residues 19–26 are G1; the sequence is GHVDHGKT. Residue 19 to 26 participates in GTP binding; that stretch reads GHVDHGKT. Thr-26 is a Mg(2+) binding site. The interval 60–64 is G2; the sequence is GITIN. The tract at residues 81 to 84 is G3; sequence DCPG. GTP-binding positions include 81–85 and 136–139; these read DCPGH and NKED. The tract at residues 136-139 is G4; the sequence is NKED. Residues 174 to 176 form a G5 region; sequence SAL.

This sequence belongs to the TRAFAC class translation factor GTPase superfamily. Classic translation factor GTPase family. EF-Tu/EF-1A subfamily.

It is found in the plastid. Its subcellular location is the chloroplast. The catalysed reaction is GTP + H2O = GDP + phosphate + H(+). In terms of biological role, GTP hydrolase that promotes the GTP-dependent binding of aminoacyl-tRNA to the A-site of ribosomes during protein biosynthesis. The polypeptide is Elongation factor Tu, chloroplastic (tufA) (Pyropia yezoensis (Susabi-nori)).